The sequence spans 1001 residues: Integrator complex subunit 7 (1001 aa).

A disordered region spans residues Asp980 to Phe1001. The span at Pro989–Phe1001 shows a compositional bias: polar residues.

This sequence belongs to the Integrator subunit 7 family. Belongs to the multiprotein complex Integrator, at least composed of IntS1, IntS2, IntS3, IntS4, omd/IntS5, IntS6, defl/IntS7, IntS8, IntS9, IntS10, IntS11, IntS12, asun/IntS13, IntS14 and IntS15. The core complex associates with protein phosphatase 2A subunits mts/PP2A and Pp2A-29B, to form the Integrator-PP2A (INTAC) complex.

It is found in the nucleus. The protein localises to the cytoplasm. Its function is as follows. Component of the integrator complex, a multiprotein complex that terminates RNA polymerase II (Pol II) transcription in the promoter-proximal region of genes. The integrator complex provides a quality checkpoint during transcription elongation by driving premature transcription termination of transcripts that are unfavorably configured for transcriptional elongation: the complex terminates transcription by (1) catalyzing dephosphorylation of the C-terminal domain (CTD) of Pol II subunit Polr2A/Rbp1 and Spt5, and (2) degrading the exiting nascent RNA transcript via endonuclease activity. The integrator complex is also involved in the 3'-end processing of the U7 snRNA, and also the spliceosomal snRNAs U1, U2, U4 and U5. This is Integrator complex subunit 7 from Drosophila melanogaster (Fruit fly).